Reading from the N-terminus, the 260-residue chain is Thrombin-like enzyme flavoxobin (260 aa).

The signal sequence occupies residues M1–A18. Residues Q19–L24 constitute a propeptide that is removed on maturation. One can recognise a Peptidase S1 domain in the interval V25–A251. 6 disulfide bridges follow: C31–C165, C52–C68, C100–C258, C144–C212, C176–C191, and C202–C227. Active-site charge relay system residues include H67 and D112. S206 functions as the Charge relay system in the catalytic mechanism.

Belongs to the peptidase S1 family. Snake venom subfamily. In terms of assembly, monomer. In terms of tissue distribution, expressed by the venom gland.

Its subcellular location is the secreted. It carries out the reaction Selective cleavage of Arg-|-Xaa bond in fibrinogen, to form fibrin, and release fibrinopeptide A. The specificity of further degradation of fibrinogen varies with species origin of the enzyme.. Its activity is regulated as follows. Inhibited by alpha(2)-macroglobulin, diisopropylfluorophosphate (DFP) and PMSF. Low inhibition by tosyl-L-lysine chloromethyl ketone. Its function is as follows. Thrombin-like snake venom serine protease that clots fibrinogen (FGA) by releasing fibrinopeptide A. According to PubMed:8585090, only cleaves rabbit fibrinogen, whereas no specificity is described in PubMed:3910643 (tests done on bovine fibrinogen). Also acts as a C3 convertase that independently cleaves human C3 and kick-starts the complement cascade. Also increases urokinase-type plasminogen activator (PLAU) and plasminogen activator inhibitor (SERPINE1) in cultured bovine pulmonary artery endothelial cells. Dose-dependently inhibits collagen-induced platelet aggregation. This chain is Thrombin-like enzyme flavoxobin (TLF1), found in Protobothrops flavoviridis (Habu).